The primary structure comprises 377 residues: MADERQAALDKALKKIEKDFGKGSIMRLGDNSNLEVETVPSGSLALDVALGVGGYPRGRIVEIYGPESSGKTTVALHAVAEVQKRGGTAAYIDAENALDPAYATALGVNIDDLLLSQPDTGEQGLQIADALISSGAIDIVVVDSVAALVPRAEIEGEMGDAHVGLQARLMSQALRKLSGTINKTKTIALFINQIREKVGVMFGNPETTPGGRALKFYATVRLEVRRAEQIKDGTDVIGNRTRIKVVKNKVAPPFKRAEVDIMYGQGISQTGELLDMAVEKDIVDKSGSWYSYGEDRIGQGRENAKQYLADHPDMMAEVNQRVRAAYGVGDEEAAATKATETKTDAPKDKDKGKTKAKDKPADVTPGQIELAPDKSAK.

An ATP-binding site is contributed by 65 to 72 (GPESSGKT). Positions 329 to 377 (GDEEAAATKATETKTDAPKDKDKGKTKAKDKPADVTPGQIELAPDKSAK) are disordered. A compositionally biased stretch (basic and acidic residues) spans 339–361 (TETKTDAPKDKDKGKTKAKDKPA).

It belongs to the RecA family.

It localises to the cytoplasm. In terms of biological role, can catalyze the hydrolysis of ATP in the presence of single-stranded DNA, the ATP-dependent uptake of single-stranded DNA by duplex DNA, and the ATP-dependent hybridization of homologous single-stranded DNAs. It interacts with LexA causing its activation and leading to its autocatalytic cleavage. The sequence is that of Protein RecA from Levilactobacillus brevis (strain ATCC 367 / BCRC 12310 / CIP 105137 / JCM 1170 / LMG 11437 / NCIMB 947 / NCTC 947) (Lactobacillus brevis).